We begin with the raw amino-acid sequence, 497 residues long: Cytochrome P450 98A8 (497 aa).

Residues 2–19 form a helical membrane-spanning segment; that stretch reads IIYLISLLPIIVATLMLY. Cys431 is a binding site for heme.

The protein belongs to the cytochrome P450 family. It depends on heme as a cofactor. In terms of tissue distribution, strongly expressed in inflorescence tips, young flower buds, seeds, stamen, tapetum and pollen.

It localises to the membrane. Acts redundantly with CYP98A9 as tricoumaroylspermidine meta-hydroxylase. Also catalyzes the meta-hydroxylation of the three triferuloylspermidine phenolic rings. Unable to use 5-O-(4-coumaroyl) D-quinate or 5-O-(4-coumaroyl) shikimate as substrates. This chain is Cytochrome P450 98A8 (CYP98A8), found in Arabidopsis thaliana (Mouse-ear cress).